A 642-amino-acid polypeptide reads, in one-letter code: MSLETYKFSDELHDDFKVVDSWINNGAKWLEDIQLYYKERSSIEKEYAQKLASLSNKYGEKKSRKSSALSVGDTPAMSAGSLECASLTTWSKILDELTRSSKTHQKLSDDYSLDIAEKLKKLESHIEALRKVYDDLYKKFSSEKETLLNSVKRAKVSYHEACDDLESARQKNDKYREQKTQRNLKLSESDMLDKKNKYLLRMLVYNAHKQKFYNETLPTLLNHMQVLNEYRVSNLNEIWCNSFSIEKSLHDTLSQRTVEIQSEIAKNEPVLDSAMFGRHNSKNWALPADLHFEPSPIWHDTDALVVDGSCKNYLRNLLVHSKNDLGKQKGELVSLDSQLEGLRVDDPNSANQSFESKKASINLEGKELMVKARIEDLEVRINKITSVANNLEEGGRFHDFKHVSFKLPTSCSYCREIIWGLSKRGCVCKNCGFKCHARCELLVPANCKNGEPEVADDDAVDTSVTATDDFDASASSSNAYESYRNTYTDDMDSSSIYQTSLSNVKTEETTPAEPASKVDGVVLYDFTGEHEGVITASEGQEFTLLEPDDGSGWVRVKIDGTDGLIPASYVKLNDELNTSVTLDGDSSYVKALYAYTAQSDMELSIQEGDIIQVTNRNAGNGWSEGILNGVTGQFPANYVTDV.

The F-BAR domain maps to 6-272 (YKFSDELHDD…EIAKNEPVLD (267 aa)). Positions 113–190 (LDIAEKLKKL…QRNLKLSESD (78 aa)) form a coiled coil. The Phorbol-ester/DAG-type zinc-finger motif lies at 397 to 447 (FHDFKHVSFKLPTSCSYCREIIWGLSKRGCVCKNCGFKCHARCELLVPANC). 2 consecutive SH3 domains span residues 515–575 (ASKV…LNDE) and 584–642 (GDSS…VTDV).

This sequence belongs to the BZZ1 family.

The protein localises to the cell tip. It localises to the cytoplasm. It is found in the cytoskeleton. Its subcellular location is the actin patch. Its function is as follows. Plays a role in endocytosis and trafficking to the vacuole. Functions with type I myosins to restore polarity of the actin cytoskeleton after NaCl stress. This Schizosaccharomyces pombe (strain 972 / ATCC 24843) (Fission yeast) protein is Protein BZZ1 (bzz1).